A 62-amino-acid chain; its full sequence is U10-buthitoxin-Hj1a (62 aa).

The N-terminal stretch at 1 to 22 is a signal peptide; sequence MQKIFIILVLFCILKFNVDVEG. Cystine bridges form between Cys-28/Cys-46, Cys-33/Cys-59, and Cys-37/Cys-61.

The protein belongs to the short scorpion toxin superfamily. Potassium channel inhibitor family. Alpha-KTx 23 subfamily. As to expression, expressed by the venom gland.

The protein resides in the secreted. Functionally, may block potassium channels. The protein is U10-buthitoxin-Hj1a of Hottentotta judaicus (Black scorpion).